The primary structure comprises 273 residues: ATP synthase subunit a (273 aa).

Helical transmembrane passes span 34–54, 94–114, 115–135, 143–163, 171–191, 218–238, and 244–264; these read IINM…CLFM, FIAP…SLDF, LPVD…LITH, DLNG…FYNI, FVHE…NLLL, FLLI…GHVV, and AIFH…LTLV.

This sequence belongs to the ATPase A chain family. F-type ATPases have 2 components, CF(1) - the catalytic core - and CF(0) - the membrane proton channel. CF(1) has five subunits: alpha(3), beta(3), gamma(1), delta(1), epsilon(1). CF(0) has three main subunits: a(1), b(2) and c(9-12). The alpha and beta chains form an alternating ring which encloses part of the gamma chain. CF(1) is attached to CF(0) by a central stalk formed by the gamma and epsilon chains, while a peripheral stalk is formed by the delta and b chains.

The protein localises to the cell inner membrane. Key component of the proton channel; it plays a direct role in the translocation of protons across the membrane. The chain is ATP synthase subunit a from Janthinobacterium sp. (strain Marseille) (Minibacterium massiliensis).